The following is a 199-amino-acid chain: Recombination protein RecR (199 aa).

The C4-type zinc finger occupies 57–72 (CQSCRTFTEETYCPIC). The 96-residue stretch at 81–176 (SVICVVETPA…AVSRIAHGVP (96 aa)) folds into the Toprim domain.

It belongs to the RecR family.

Functionally, may play a role in DNA repair. It seems to be involved in an RecBC-independent recombinational process of DNA repair. It may act with RecF and RecO. The chain is Recombination protein RecR from Shewanella piezotolerans (strain WP3 / JCM 13877).